The following is a 469-amino-acid chain: 6-phosphofructo-2-kinase/fructose-2,6-bisphosphatase 4 (469 aa).

The tract at residues 1–249 is 6-phosphofructo-2-kinase; that stretch reads MASPRELTQN…YYLMNIHVTP (249 aa). 46 to 54 contributes to the ATP binding site; the sequence is GLPARGKTY. Beta-D-fructose 6-phosphate contacts are provided by Arg-79 and Arg-103. The active site involves Asp-129. Thr-131 and Arg-137 together coordinate beta-D-fructose 6-phosphate. Cys-159 is a catalytic residue. Position 168-173 (168-173) interacts with ATP; the sequence is NIVQVK. 3 residues coordinate beta-D-fructose 6-phosphate: Lys-173, Arg-194, and Tyr-198. The interval 250–469 is fructose-2,6-bisphosphatase; it reads RSIYLCRHGE…EALVTVPAHQ (220 aa). A beta-D-fructose 2,6-bisphosphate-binding site is contributed by Arg-256. The Tele-phosphohistidine intermediate role is filled by His-257. Residues Asn-263, Gly-269, and Arg-306 each contribute to the beta-D-fructose 2,6-bisphosphate site. The active-site Proton donor/acceptor is the Glu-326. Residues Tyr-337, Arg-351, Lys-355, Tyr-366, Gln-392, and Arg-396 each contribute to the beta-D-fructose 2,6-bisphosphate site. An ATP-binding site is contributed by 348-351; it reads FALR. ATP is bound by residues 392 to 396 and Tyr-428; that span reads QAVMR. A Phosphothreonine; by PKC modification is found at Thr-444.

The protein in the C-terminal section; belongs to the phosphoglycerate mutase family. As to quaternary structure, homodimer.

It carries out the reaction beta-D-fructose 2,6-bisphosphate + H2O = beta-D-fructose 6-phosphate + phosphate. The catalysed reaction is beta-D-fructose 6-phosphate + ATP = beta-D-fructose 2,6-bisphosphate + ADP + H(+). The most important regulatory mechanism of these opposing activities is by phosphorylation and dephosphorylation of the enzyme. Functionally, synthesis and degradation of fructose 2,6-bisphosphate. The polypeptide is 6-phosphofructo-2-kinase/fructose-2,6-bisphosphatase 4 (PFKFB4) (Macaca fascicularis (Crab-eating macaque)).